The following is a 206-amino-acid chain: Translation machinery-associated protein 22 (206 aa).

The SUI1 domain maps to 98–169; the sequence is VVIKREARTK…EVEKYIHSLL (72 aa). Positions 184–206 are disordered; the sequence is SQKKKKKPTDEANSNNNNNNNNK. The span at 196 to 206 shows a compositional bias: low complexity; it reads NSNNNNNNNNK.

The protein belongs to the DENR family. As to quaternary structure, interacts with the 40S ribosomal subunit.

The protein localises to the cytoplasm. The polypeptide is Translation machinery-associated protein 22 (TMA22) (Vanderwaltozyma polyspora (strain ATCC 22028 / DSM 70294 / BCRC 21397 / CBS 2163 / NBRC 10782 / NRRL Y-8283 / UCD 57-17) (Kluyveromyces polysporus)).